The sequence spans 511 residues: Cytochrome P450 76C4 (511 aa).

The helical transmembrane segment at 3–23 (IISGQALFLLFCFISSCFLIS) threads the bilayer. Cys450 contacts heme.

Belongs to the cytochrome P450 family. Heme is required as a cofactor.

It is found in the membrane. The polypeptide is Cytochrome P450 76C4 (CYP76C4) (Arabidopsis thaliana (Mouse-ear cress)).